Consider the following 623-residue polypeptide: NAD-dependent malic enzyme 1, mitochondrial (623 aa).

A mitochondrion-targeting transit peptide spans 1-38 (MGIANKLRLSSSSLSRILHRRILYSSAVRSFTTSEGHR). The Proton donor role is filled by tyrosine 143. Residue arginine 196 participates in NAD(+) binding. Lysine 214 functions as the Proton acceptor in the catalytic mechanism. Residues glutamate 285, aspartate 286, and aspartate 309 each coordinate a divalent metal cation. 2 residues coordinate NAD(+): aspartate 309 and asparagine 464.

Belongs to the malic enzymes family. Homodimer. Heterodimer of two related subunits in NAD-MEH complex. Interacts with NAD-ME2. It depends on Mg(2+) as a cofactor. Mn(2+) is required as a cofactor. In terms of tissue distribution, expressed in leaves, stems, flowers, and roots (at protein level).

The protein resides in the mitochondrion. It catalyses the reaction (S)-malate + NAD(+) = pyruvate + CO2 + NADH. With respect to regulation, activated by oxaloacetate (OAA), 2-ketoglutarate, succinate and fumarate as homodimer and by OAA, 2-ketoglutarate, succinate, fumarate and coenzyme A (acetyl-CoA and CoA) as heterodimer NAD-MEH. Functionally, involved in the regulation of sugars and amino acids metabolisms during the night period. The protein is NAD-dependent malic enzyme 1, mitochondrial (NAD-ME1) of Arabidopsis thaliana (Mouse-ear cress).